Reading from the N-terminus, the 513-residue chain is GMP synthase [glutamine-hydrolyzing] (513 aa).

A Glutamine amidotransferase type-1 domain is found at 9-198 (LILVLDFGSQ…VRRVCNCTGE (190 aa)). Cys86 (nucleophile) is an active-site residue. Active-site residues include His172 and Glu174. Positions 199-388 (WTMENFIEIE…LGIPEHLVWR (190 aa)) constitute a GMPS ATP-PPase domain. Residue 226 to 232 (SGGVDSS) coordinates ATP.

Homodimer.

It carries out the reaction XMP + L-glutamine + ATP + H2O = GMP + L-glutamate + AMP + diphosphate + 2 H(+). It functions in the pathway purine metabolism; GMP biosynthesis; GMP from XMP (L-Gln route): step 1/1. Functionally, catalyzes the synthesis of GMP from XMP. In Staphylococcus epidermidis (strain ATCC 35984 / DSM 28319 / BCRC 17069 / CCUG 31568 / BM 3577 / RP62A), this protein is GMP synthase [glutamine-hydrolyzing].